Here is a 72-residue protein sequence, read N- to C-terminus: Conotoxin Vc6.16 (72 aa).

A signal peptide spans M1–A19. Residues L20–Q44 constitute a propeptide that is removed on maturation. Disulfide bonds link C48–C62, C55–C66, and C61–C71.

It belongs to the conotoxin O2 superfamily. In terms of tissue distribution, expressed by the venom duct.

It is found in the secreted. Its function is as follows. Inhibits voltage-gated ion channels. This Conus victoriae (Queen Victoria cone) protein is Conotoxin Vc6.16.